The following is a 1112-amino-acid chain: Plasma membrane calcium-transporting ATPase 2 (1112 aa).

At 1–94 (MGDMSNSDFY…NLIPPKKPKT (94 aa)) the chain is on the cytoplasmic side. The helical transmembrane segment at 95–115 (FLQLVWEALQDVTLIILEIAA) threads the bilayer. Residues 116 to 152 (LISLGLSFYHPPGETGGESCGAAAGGVEDEGEADAGW) are Extracellular-facing. Residues 153–173 (IEGAAILLSVVCVVLVTAFND) traverse the membrane as a helical segment. At 174–373 (WSKEKQFRGL…KEKSVLQGKL (200 aa)) the chain is on the cytoplasmic side. The span at 298–311 (EKKEKKGGAVEDGH) shows a compositional bias: basic and acidic residues. The interval 298–363 (EKKEKKGGAV…KERKKVSAPK (66 aa)) is disordered. A compositionally biased stretch (polar residues) spans 312 to 327 (QNTGKMQDGNMESNQI). Positions 351 to 363 (ADEKERKKVSAPK) are enriched in basic and acidic residues. A helical membrane pass occupies residues 374–393 (TKLAVQIGKAGLLMSAITVI). The Extracellular portion of the chain corresponds to 394 to 426 (ILVLYFAIDNFVMQKRPWMPECTPIYIQYFVKF). The helical transmembrane segment at 427–444 (FIIGVTVLVVAVPEGLPL) threads the bilayer. Over 445–858 (AVTISLAYSV…MWGRNVYDSI (414 aa)) the chain is Cytoplasmic. The active-site 4-aspartylphosphate intermediate is D482. Residues D803 and D807 each contribute to the Mg(2+) site. The chain crosses the membrane as a helical span at residues 859–878 (SKFLQFQLTVNVVAVIVAFT). The Extracellular portion of the chain corresponds to 879–888 (GACITQDSPL). A helical membrane pass occupies residues 889 to 909 (KAVQMLWVNLIMDTFASLALA). Topologically, residues 910-929 (TEPPTESLLKRKPYGRNKPL) are cytoplasmic. Residues 930–952 (ISSTMTKNILGHGVYQLIIIFTL) traverse the membrane as a helical segment. Topologically, residues 953-970 (LFVGEQIFDIDSGRNAPL) are extracellular. A helical transmembrane segment spans residues 971 to 992 (HSPPSEHYTIIFNTFVMMQLFN). Topologically, residues 993-1011 (EINARKIHGERNVFDGIFR) are cytoplasmic. A helical membrane pass occupies residues 1012 to 1033 (NPIFCSIVFGTFAVQIVIVQFG). At 1034–1043 (GKPFSCQPLD) the chain is on the extracellular side. The helical transmembrane segment at 1044–1065 (LEKWMWCVFLGLGELVWGQVIA) threads the bilayer. Residues 1066 to 1112 (TIPNSRLRFLRRAGQLTQKDELPEEDVNEENEEIDHAERELRRGQIL) are Cytoplasmic-facing. The segment at 1086–1112 (ELPEEDVNEENEEIDHAERELRRGQIL) is disordered. Residues 1087-1098 (LPEEDVNEENEE) show a composition bias toward acidic residues. Residues 1099–1112 (IDHAERELRRGQIL) show a composition bias toward basic and acidic residues. A calmodulin-binding subdomain A region spans residues 1106–1112 (LRRGQIL).

Belongs to the cation transport ATPase (P-type) (TC 3.A.3) family. Type IIB subfamily.

The protein localises to the cell membrane. It catalyses the reaction Ca(2+)(in) + ATP + H2O = Ca(2+)(out) + ADP + phosphate + H(+). Its function is as follows. This magnesium-dependent enzyme catalyzes the hydrolysis of ATP coupled with the transport of calcium out of the cell. In Oreochromis mossambicus (Mozambique tilapia), this protein is Plasma membrane calcium-transporting ATPase 2 (atp2b2).